The sequence spans 730 residues: Catalase-peroxidase 1 (730 aa).

Residues 1–24 (MQEKGKCPVTGMTKHKTSGGTTNQ) are disordered. The segment at residues 95-218 (WHSAGTYRMG…LAAVQMGLIY (124 aa)) is a cross-link (tryptophyl-tyrosyl-methioninium (Trp-Tyr) (with M-244)). Histidine 96 (proton acceptor) is an active-site residue. Positions 218–244 (YVNPEGPNGQPSALASGKDIRDTFARM) form a cross-link, tryptophyl-tyrosyl-methioninium (Tyr-Met) (with W-95). Position 259 (histidine 259) interacts with heme b.

The protein belongs to the peroxidase family. Peroxidase/catalase subfamily. In terms of assembly, homodimer or homotetramer. The cofactor is heme b. Formation of the three residue Trp-Tyr-Met cross-link is important for the catalase, but not the peroxidase activity of the enzyme.

The enzyme catalyses H2O2 + AH2 = A + 2 H2O. It catalyses the reaction 2 H2O2 = O2 + 2 H2O. Its function is as follows. Bifunctional enzyme with both catalase and broad-spectrum peroxidase activity. The chain is Catalase-peroxidase 1 from Alkaliphilus metalliredigens (strain QYMF).